The primary structure comprises 122 residues: Large ribosomal subunit protein uL14 (122 aa).

This sequence belongs to the universal ribosomal protein uL14 family. As to quaternary structure, part of the 50S ribosomal subunit. Forms a cluster with proteins L3 and L19. In the 70S ribosome, L14 and L19 interact and together make contacts with the 16S rRNA in bridges B5 and B8.

Functionally, binds to 23S rRNA. Forms part of two intersubunit bridges in the 70S ribosome. This Magnetococcus marinus (strain ATCC BAA-1437 / JCM 17883 / MC-1) protein is Large ribosomal subunit protein uL14.